A 478-amino-acid polypeptide reads, in one-letter code: JmjC domain-containing histone demethylation protein 1 (478 aa).

Residues 5-68 form a PHD-type zinc finger; it reads SESCPLCKVH…IYHCPECVPK (64 aa). Positions 217-383 constitute a JmjC domain; that stretch reads SDVAKLGVDF…MQLKINEIER (167 aa). Position 266 (T266) interacts with substrate. 2 residues coordinate Fe cation: H269 and D271. Residue K286 participates in substrate binding. H351 lines the Fe cation pocket.

This sequence belongs to the JHDM1 histone demethylase family. Fe(2+) is required as a cofactor.

It localises to the nucleus. The catalysed reaction is N(6),N(6)-dimethyl-L-lysyl(36)-[histone H3] + 2 2-oxoglutarate + 2 O2 = L-lysyl(36)-[histone H3] + 2 formaldehyde + 2 succinate + 2 CO2. Histone demethylase that specifically demethylates 'Lys-36' of histone H3, thereby playing a central role in histone code. The protein is JmjC domain-containing histone demethylation protein 1 (JHD1) of Candida albicans (strain SC5314 / ATCC MYA-2876) (Yeast).